Here is a 170-residue protein sequence, read N- to C-terminus: MADPSTLTHPDPEGGVRMMDASQKSDSARTAVAAGRVHLGEEAFRRVREHDIEKGDVLTTAQIAGIMGAKQTDKLIPLCHDATINGVEVDFTFNEDEQAIDVRAFTKSFGVTGVEMEALTAVSVASLTIYDMCKSVTKDIRIGDVHLRAKTGGQSGNWKSKSEDTSPAES.

A disordered region spans residues 1–25 (MADPSTLTHPDPEGGVRMMDASQKS). Substrate-binding positions include 78–80 (LCH) and 116–117 (ME). Residue D131 is part of the active site.

The protein belongs to the MoaC family. As to quaternary structure, homohexamer; trimer of dimers.

The catalysed reaction is (8S)-3',8-cyclo-7,8-dihydroguanosine 5'-triphosphate = cyclic pyranopterin phosphate + diphosphate. Its pathway is cofactor biosynthesis; molybdopterin biosynthesis. Functionally, catalyzes the conversion of (8S)-3',8-cyclo-7,8-dihydroguanosine 5'-triphosphate to cyclic pyranopterin monophosphate (cPMP). This chain is Cyclic pyranopterin monophosphate synthase, found in Salinibacter ruber (strain DSM 13855 / M31).